A 1154-amino-acid chain; its full sequence is uncharacterized protein (1154 aa).

The first 18 residues, 1-18 (MKRNIFIKLLISLLLLSS), serve as a signal peptide directing secretion. Cys19 carries N-palmitoyl cysteine lipidation. Cys19 is lipidated: S-diacylglycerol cysteine. The next 4 helical transmembrane spans lie at 288–308 (ISVS…FLIG), 394–414 (LGFI…FLIF), 423–443 (ALIT…FMLF), and 458–478 (ISYA…SMII).

The protein belongs to the TrbL/VirB6 family.

The protein resides in the cell membrane. This is an uncharacterized protein from Rickettsia typhi (strain ATCC VR-144 / Wilmington).